The chain runs to 702 residues: Methionine--tRNA ligase (702 aa).

The 'HIGH' region signature appears at 23-33 (PYANGPLHLGH). Zn(2+)-binding residues include cysteine 154, cysteine 157, cysteine 167, and cysteine 170. A 'KMSKS' region motif is present at residues 341–345 (KMSKS). Position 344 (lysine 344) interacts with ATP. The disordered stretch occupies residues 562-593 (LAPPPASAKQQNASMSNTAPPPTAEKPETTAP). Polar residues predominate over residues 569–578 (AKQQNASMSN). One can recognise a tRNA-binding domain in the interval 599 to 702 (DFAKLDLRIG…SSAQPGMPVR (104 aa)).

Belongs to the class-I aminoacyl-tRNA synthetase family. MetG type 1 subfamily. Homodimer. Requires Zn(2+) as cofactor.

It is found in the cytoplasm. The enzyme catalyses tRNA(Met) + L-methionine + ATP = L-methionyl-tRNA(Met) + AMP + diphosphate. Its function is as follows. Is required not only for elongation of protein synthesis but also for the initiation of all mRNA translation through initiator tRNA(fMet) aminoacylation. The sequence is that of Methionine--tRNA ligase from Xylella fastidiosa (strain 9a5c).